The sequence spans 89 residues: Signal recognition particle 19 kDa protein (89 aa).

It belongs to the SRP19 family. Part of the signal recognition particle protein translocation system, which is composed of SRP and FtsY. Archaeal SRP consists of a 7S RNA molecule of 300 nucleotides and two protein subunits: SRP54 and SRP19.

The protein resides in the cytoplasm. Involved in targeting and insertion of nascent membrane proteins into the cytoplasmic membrane. Binds directly to 7S RNA and mediates binding of the 54 kDa subunit of the SRP. In Methanococcus maripaludis (strain C7 / ATCC BAA-1331), this protein is Signal recognition particle 19 kDa protein.